The sequence spans 332 residues: L-lactate dehydrogenase A chain (332 aa).

Ala2 carries the post-translational modification N-acetylalanine. Residue Lys5 is modified to N6-acetyllysine; alternate. The residue at position 5 (Lys5) is an N6-succinyllysine; alternate. Lys14 bears the N6-acetyllysine mark. Residue 29 to 57 (GAVGMACAISILMKDLADELALVDVIEDK) participates in NAD(+) binding. Lys57 bears the N6-acetyllysine; alternate mark. Lys57 participates in a covalent cross-link: Glycyl lysine isopeptide (Lys-Gly) (interchain with G-Cter in SUMO2); alternate. An N6-acetyllysine modification is found at Lys81. Residue Arg99 participates in NAD(+) binding. Arg106 contributes to the substrate binding site. Lys118 bears the N6-acetyllysine; alternate mark. At Lys118 the chain carries N6-succinyllysine; alternate. Lys126 is subject to N6-acetyllysine. Asn138 provides a ligand contact to NAD(+). Substrate is bound by residues Asn138 and Arg169. His193 (proton acceptor) is an active-site residue. Ser213 is subject to Phosphoserine. N6-acetyllysine occurs at positions 224 and 232. Phosphotyrosine is present on Tyr239. Residue Lys243 is modified to N6-acetyllysine. Thr248 provides a ligand contact to substrate. The residue at position 309 (Thr309) is a Phosphothreonine. At Lys318 the chain carries N6-acetyllysine; alternate. The residue at position 318 (Lys318) is an N6-succinyllysine; alternate. At Thr322 the chain carries Phosphothreonine.

The protein belongs to the LDH/MDH superfamily. LDH family. In terms of assembly, homotetramer. Interacts with PTEN upstream reading frame protein MP31. Post-translationally, ISGylated.

It is found in the cytoplasm. It catalyses the reaction (S)-lactate + NAD(+) = pyruvate + NADH + H(+). The protein operates within fermentation; pyruvate fermentation to lactate; (S)-lactate from pyruvate: step 1/1. Interconverts simultaneously and stereospecifically pyruvate and lactate with concomitant interconversion of NADH and NAD(+). This is L-lactate dehydrogenase A chain (Ldha) from Rattus norvegicus (Rat).